The primary structure comprises 369 residues: Phosphate-binding protein PstS 3 (369 aa).

The signal sequence occupies residues 1-21 (MKLNQFGAAIGLLATGALLSG). Cysteine 22 carries the N-palmitoyl cysteine lipid modification. Cysteine 22 carries the S-diacylglycerol cysteine lipid modification. Residues 55–57 (STA), serine 85, aspartate 103, and 190–192 (SGT) each bind phosphate.

Belongs to the PstS family. The complex is composed of two ATP-binding proteins (PstB), two transmembrane proteins (PstC and PstA) and a solute-binding protein (PstS).

The protein localises to the cell membrane. In terms of biological role, part of the ABC transporter complex PstSACB involved in phosphate import. The chain is Phosphate-binding protein PstS 3 (pstS2) from Mycobacterium leprae (strain TN).